A 241-amino-acid polypeptide reads, in one-letter code: 3-deoxy-D-manno-octulosonic acid kinase (241 aa).

Asp171 is an active-site residue.

Belongs to the protein kinase superfamily. KdkA/RfaP family.

It is found in the cell inner membrane. The catalysed reaction is an alpha-Kdo-(2-&gt;6)-lipid IVA + ATP = a 4-O-phospho-alpha-Kdo-(2-&gt;6)-lipid IVA + ADP + H(+). The protein operates within bacterial outer membrane biogenesis; LPS core biosynthesis. Catalyzes the ATP-dependent phosphorylation of the 3-deoxy-D-manno-octulosonic acid (Kdo) residue in Kdo-lipid IV(A) at the 4-OH position. The sequence is that of 3-deoxy-D-manno-octulosonic acid kinase from Haemophilus influenzae (strain PittGG).